Here is a 348-residue protein sequence, read N- to C-terminus: MTQKLVTKPFIEVISGKRQASPPMWMMRQAGRYLPEYRATRTEAGSFLDLCFNPKLAAEVTLQPIRRFGFDAAIIFSDILVVPYALGRAVRFEVGEGPRLDPLNSPDLVGTLNGAIDLGKLEPVFEALRIVRSELAPETTLIGFCGAPFTVATYMVAGQGTSDQHPARLMAYQHPGAFAKIIDVLVESSIQYLLKQLEAGADVLQIFDTWGGILPPREFEKWCIEPTRRIVEGVRKVKPDAKIIGFPRGAGALLPAFIERTGVDAVSIDWTAEPKMVRDQVQTKVAVQGNLDPLLLIAGGSALDQGVDDVLKNFSAGRHIFNLGHGITPDASIAHVEQMVKRVRAFRG.

Substrate is bound by residues 28–32 (RQAGR), Asp78, Tyr154, Thr209, and His325.

This sequence belongs to the uroporphyrinogen decarboxylase family. Homodimer.

It localises to the cytoplasm. The catalysed reaction is uroporphyrinogen III + 4 H(+) = coproporphyrinogen III + 4 CO2. The protein operates within porphyrin-containing compound metabolism; protoporphyrin-IX biosynthesis; coproporphyrinogen-III from 5-aminolevulinate: step 4/4. In terms of biological role, catalyzes the decarboxylation of four acetate groups of uroporphyrinogen-III to yield coproporphyrinogen-III. The protein is Uroporphyrinogen decarboxylase of Rhodopseudomonas palustris (strain BisB5).